A 110-amino-acid polypeptide reads, in one-letter code: Phosphoribosyl-ATP pyrophosphatase (110 aa).

It belongs to the PRA-PH family.

Its subcellular location is the cytoplasm. The enzyme catalyses 1-(5-phospho-beta-D-ribosyl)-ATP + H2O = 1-(5-phospho-beta-D-ribosyl)-5'-AMP + diphosphate + H(+). It functions in the pathway amino-acid biosynthesis; L-histidine biosynthesis; L-histidine from 5-phospho-alpha-D-ribose 1-diphosphate: step 2/9. This Azotobacter chroococcum mcd 1 protein is Phosphoribosyl-ATP pyrophosphatase (hisE).